A 559-amino-acid chain; its full sequence is Urocanate hydratase (559 aa).

NAD(+) contacts are provided by residues 49-50, Gln-127, 173-175, Asp-193, Arg-198, 239-240, 260-264, 270-271, and Tyr-319; these read GG, GMG, NA, QTSAH, and YL. Residue Cys-407 is part of the active site. Gly-489 lines the NAD(+) pocket.

It belongs to the urocanase family. NAD(+) serves as cofactor.

It is found in the cytoplasm. The catalysed reaction is 4-imidazolone-5-propanoate = trans-urocanate + H2O. It participates in amino-acid degradation; L-histidine degradation into L-glutamate; N-formimidoyl-L-glutamate from L-histidine: step 2/3. Catalyzes the conversion of urocanate to 4-imidazolone-5-propionate. The polypeptide is Urocanate hydratase (Shouchella clausii (strain KSM-K16) (Alkalihalobacillus clausii)).